We begin with the raw amino-acid sequence, 293 residues long: Protease HtpX (293 aa).

2 helical membrane passes run 4-24 (IALF…VLSL) and 34-54 (GLMI…LLMS). Histidine 139 lines the Zn(2+) pocket. Glutamate 140 is a catalytic residue. Zn(2+) is bound at residue histidine 143. Transmembrane regions (helical) follow at residues 158–178 (IVNT…AGFL) and 193–213 (MVYF…ASII). Glutamate 222 provides a ligand contact to Zn(2+).

The protein belongs to the peptidase M48B family. The cofactor is Zn(2+).

It localises to the cell inner membrane. This is Protease HtpX from Yersinia enterocolitica serotype O:8 / biotype 1B (strain NCTC 13174 / 8081).